We begin with the raw amino-acid sequence, 188 residues long: ATP synthase subunit b 2 (188 aa).

The chain crosses the membrane as a helical span at residues 41–61; sequence FFWLVISFGFFYFFIARVIVP.

Belongs to the ATPase B chain family. In terms of assembly, F-type ATPases have 2 components, F(1) - the catalytic core - and F(0) - the membrane proton channel. F(1) has five subunits: alpha(3), beta(3), gamma(1), delta(1), epsilon(1). F(0) has three main subunits: a(1), b(2) and c(10-14). The alpha and beta chains form an alternating ring which encloses part of the gamma chain. F(1) is attached to F(0) by a central stalk formed by the gamma and epsilon chains, while a peripheral stalk is formed by the delta and b chains.

Its subcellular location is the cell inner membrane. Its function is as follows. F(1)F(0) ATP synthase produces ATP from ADP in the presence of a proton or sodium gradient. F-type ATPases consist of two structural domains, F(1) containing the extramembraneous catalytic core and F(0) containing the membrane proton channel, linked together by a central stalk and a peripheral stalk. During catalysis, ATP synthesis in the catalytic domain of F(1) is coupled via a rotary mechanism of the central stalk subunits to proton translocation. Functionally, component of the F(0) channel, it forms part of the peripheral stalk, linking F(1) to F(0). The b'-subunit is a diverged and duplicated form of b found in plants and photosynthetic bacteria. The polypeptide is ATP synthase subunit b 2 (atpF2) (Bartonella bacilliformis (strain ATCC 35685 / KC583 / Herrer 020/F12,63)).